A 462-amino-acid polypeptide reads, in one-letter code: 23S rRNA (uracil(1939)-C(5))-methyltransferase RlmD (462 aa).

A TRAM domain is found at 6 to 76; sequence KSRKPQQPEY…KRLEEAEMVE (71 aa). Residues Cys90, Cys96, Cys99, and Cys178 each contribute to the [4Fe-4S] cluster site. S-adenosyl-L-methionine-binding residues include Gln287, Phe316, Asn321, Glu340, Asp367, and Asp388. The active-site Nucleophile is Cys414.

This sequence belongs to the class I-like SAM-binding methyltransferase superfamily. RNA M5U methyltransferase family. RlmD subfamily.

The catalysed reaction is uridine(1939) in 23S rRNA + S-adenosyl-L-methionine = 5-methyluridine(1939) in 23S rRNA + S-adenosyl-L-homocysteine + H(+). Its function is as follows. Catalyzes the formation of 5-methyl-uridine at position 1939 (m5U1939) in 23S rRNA. This chain is 23S rRNA (uracil(1939)-C(5))-methyltransferase RlmD, found in Acinetobacter baumannii (strain AB0057).